The following is a 410-amino-acid chain: Digeranylgeranylglycerophospholipid reductase (410 aa).

Residues alanine 15, glutamate 34, valine 118, aspartate 286, glycine 298, and isoleucine 299 each coordinate FAD. Residues lysine 343 and alanine 379 each contribute to the a 2,3-bis-O-(geranylgeranyl)-sn-glycerol 1-phospholipid site.

It belongs to the geranylgeranyl reductase family. DGGGPL reductase subfamily. FAD is required as a cofactor.

It carries out the reaction a 2,3-bis-O-phytanyl-sn-glycerol 1-phospholipid + 8 A = a 2,3-bis-O-(geranylgeranyl)-sn-glycerol 1-phospholipid + 8 AH2. The catalysed reaction is 2,3-bis-O-(phytanyl)-sn-glycerol 1-phosphate + 8 A = 2,3-bis-O-(geranylgeranyl)-sn-glycerol 1-phosphate + 8 AH2. The enzyme catalyses CDP-2,3-bis-O-(geranylgeranyl)-sn-glycerol + 8 AH2 = CDP-2,3-bis-O-(phytanyl)-sn-glycerol + 8 A. It catalyses the reaction archaetidylserine + 8 AH2 = 2,3-bis-O-phytanyl-sn-glycero-3-phospho-L-serine + 8 A. The protein operates within membrane lipid metabolism; glycerophospholipid metabolism. Functionally, is involved in the reduction of 2,3-digeranylgeranylglycerophospholipids (unsaturated archaeols) into 2,3-diphytanylglycerophospholipids (saturated archaeols) in the biosynthesis of archaeal membrane lipids. Can fully reduce the unsaturated isoprenoid side chains of membrane phospholipids and glycolipids. Is also able to reduce the omega-position isoprene of dolichol phosphate. This chain is Digeranylgeranylglycerophospholipid reductase, found in Haloferax volcanii (strain ATCC 29605 / DSM 3757 / JCM 8879 / NBRC 14742 / NCIMB 2012 / VKM B-1768 / DS2) (Halobacterium volcanii).